Reading from the N-terminus, the 473-residue chain is Cysteine--tRNA ligase (473 aa).

Position 28 (Cys28) interacts with Zn(2+). Residues Met30 to His40 carry the 'HIGH' region motif. Zn(2+) contacts are provided by Cys209, His234, and Glu238. A 'KMSKS' region motif is present at residues Lys282–Ser286. An ATP-binding site is contributed by Lys285.

Belongs to the class-I aminoacyl-tRNA synthetase family. Monomer. Requires Zn(2+) as cofactor.

The protein resides in the cytoplasm. It catalyses the reaction tRNA(Cys) + L-cysteine + ATP = L-cysteinyl-tRNA(Cys) + AMP + diphosphate. This Neisseria gonorrhoeae (strain ATCC 700825 / FA 1090) protein is Cysteine--tRNA ligase.